The sequence spans 108 residues: MADKVIALACAAGMSTSLLVSKMQKAAADNGKDYEIFAKSTADIDNMLAGTGSPKPDVLLLGPQVAFMKGEVAKKAEIAGVPMDVIKMQDYGMMRGDKVLAAAENLMN.

A PTS EIIB type-3 domain is found at 3–108 (DKVIALACAA…VLAAAENLMN (106 aa)). The active-site Phosphocysteine intermediate is the Cys-10. The residue at position 10 (Cys-10) is a Phosphocysteine; by EIIA.

The catalysed reaction is D-cellobiose(out) + N(pros)-phospho-L-histidyl-[protein] = 6-phospho-beta-D-glucosyl-(1-&gt;4)-D-glucose(in) + L-histidyl-[protein]. Functionally, the phosphoenolpyruvate-dependent sugar phosphotransferase system (sugar PTS), a major carbohydrate active transport system, catalyzes the phosphorylation of incoming sugar substrates concomitantly with their translocation across the cell membrane. Involved in cellobiose transport with PtcA and CelB. This system can also transport lactose. This is PTS system cellobiose-specific EIIB component from Lactococcus lactis subsp. lactis (strain IL1403) (Streptococcus lactis).